We begin with the raw amino-acid sequence, 199 residues long: MDSLLKKQRQFLYQFKNVRWAKGRHETYLCYVVKRRDSPTSFSLDFGHLRNKAGCHVELLFLRYISDWDLDPGRCYRVTWFTSWSPCYDCARHVADFLRGYPNLSLRIFTARLYFCDKERKAEPEGLRRLHRAGVQIAIMTFKDYFYCWNTFVENHERTFKAWEGLHENSVRLSRQLRRILLPLYEVDDLRDAFRTLGL.

A Bipartite nuclear localization signal motif is present at residues 1–30 (MDSLLKKQRQFLYQFKNVRWAKGRHETYLC). Positions 2 to 26 (DSLLKKQRQFLYQFKNVRWAKGRHE) are interaction with SUPT6H. One can recognise a CMP/dCMP-type deaminase domain in the interval 23–130 (GRHETYLCYV…KAEPEGLRRL (108 aa)). Threonine 27 carries the post-translational modification Phosphothreonine; by PKA. Phosphoserine; by PKA is present on serine 38. The interval 39-42 (PTSF) is important for interaction with CTNNBL1. Histidine 56 provides a ligand contact to Zn(2+). Glutamate 58 (proton donor) is an active-site residue. Zn(2+) is bound by residues cysteine 87 and cysteine 90. Positions 88–116 (YDCARHVADFLRGYPNLSLRIFTARLYFC) are required for interaction with RNF126. The short motif at 184–199 (LYEVDDLRDAFRTLGL) is the Nuclear export signal element.

The protein belongs to the cytidine and deoxycytidylate deaminase family. Interacts with CTNNBL1; the interaction is important for the immunoglobulin switch activity of AICDA. Interacts (via its NLS) with KPNA1. Interacts with PKA/PRKACA and PRKAR1A/PKR1. Interacts with SUPT6H, TRIM28 and NCL. Directly interacts with MCM3AP; this interaction may favor AICDA recruitment to immunoglobulin variable region genes, hence promoting somatic hypermutations. Zn(2+) is required as a cofactor. Post-translationally, ser-38 is the major site whereas Thr-27 is the minor site of phosphorylation. Phosphorylation regulates its class-switch recombination activity. Probably monoubiquitinated on several residues by RNF126. As to expression, expressed in lymph nodes, spleen and thymus.

The protein localises to the nucleus. Its subcellular location is the cytoplasm. The enzyme catalyses a 2'-deoxycytidine in single-stranded DNA + H2O + H(+) = a 2'-deoxyuridine in single-stranded DNA + NH4(+). Its function is as follows. Single-stranded DNA-specific cytidine deaminase. Involved in somatic hypermutation (SHM), gene conversion, and class-switch recombination (CSR) in B-lymphocytes by deaminating C to U during transcription of Ig-variable (V) and Ig-switch (S) region DNA. Required for several crucial steps of B-cell terminal differentiation necessary for efficient antibody responses. May also play a role in the epigenetic regulation of gene expression by participating in DNA demethylation. This is Single-stranded DNA cytosine deaminase (AICDA) from Bos taurus (Bovine).